Reading from the N-terminus, the 307-residue chain is Probable rRNA-processing protein EBP2 homolog (307 aa).

3 disordered regions span residues Met-1 to Glu-22, Gln-189 to Lys-208, and Glu-236 to Lys-307. The stretch at Glu-205–Lys-252 forms a coiled coil. Positions Glu-236–Asn-245 are enriched in basic and acidic residues. Composition is skewed to basic residues over residues Arg-246–Thr-266 and Arg-294–Lys-307.

The protein belongs to the EBP2 family.

The protein resides in the nucleus. The protein localises to the nucleolus. Required for the processing of the 27S pre-rRNA. This Drosophila melanogaster (Fruit fly) protein is Probable rRNA-processing protein EBP2 homolog.